A 173-amino-acid chain; its full sequence is Crossover junction endodeoxyribonuclease RuvC (173 aa).

Catalysis depends on residues aspartate 8, glutamate 67, and aspartate 139. Residues aspartate 8, glutamate 67, and aspartate 139 each coordinate Mg(2+).

This sequence belongs to the RuvC family. In terms of assembly, homodimer which binds Holliday junction (HJ) DNA. The HJ becomes 2-fold symmetrical on binding to RuvC with unstacked arms; it has a different conformation from HJ DNA in complex with RuvA. In the full resolvosome a probable DNA-RuvA(4)-RuvB(12)-RuvC(2) complex forms which resolves the HJ. Mg(2+) is required as a cofactor.

It localises to the cytoplasm. It carries out the reaction Endonucleolytic cleavage at a junction such as a reciprocal single-stranded crossover between two homologous DNA duplexes (Holliday junction).. Its function is as follows. The RuvA-RuvB-RuvC complex processes Holliday junction (HJ) DNA during genetic recombination and DNA repair. Endonuclease that resolves HJ intermediates. Cleaves cruciform DNA by making single-stranded nicks across the HJ at symmetrical positions within the homologous arms, yielding a 5'-phosphate and a 3'-hydroxyl group; requires a central core of homology in the junction. The consensus cleavage sequence is 5'-(A/T)TT(C/G)-3'. Cleavage occurs on the 3'-side of the TT dinucleotide at the point of strand exchange. HJ branch migration catalyzed by RuvA-RuvB allows RuvC to scan DNA until it finds its consensus sequence, where it cleaves and resolves the cruciform DNA. This is Crossover junction endodeoxyribonuclease RuvC from Vibrio atlanticus (strain LGP32) (Vibrio splendidus (strain Mel32)).